Reading from the N-terminus, the 305-residue chain is Serine/threonine-protein kinase 16 (305 aa).

Gly-2 is lipidated: N-myristoyl glycine. S-palmitoyl cysteine attachment occurs at residues Cys-6 and Cys-8. One can recognise a Protein kinase domain in the interval 20–293 (YLFVQKLGEG…PVLLSQLEAL (274 aa)). Residues 26–34 (LGEGGFSYV) and Lys-49 each bind ATP. The active-site Proton acceptor is the Asp-148. An activation loop region spans residues 166–202 (DLGSMNQACIQVEGSRQALALQDWAAQRCTISYRAPE). Position 197 is a phosphoserine; by autocatalysis (Ser-197). Tyr-198 bears the Phosphotyrosine; by autocatalysis mark.

It belongs to the protein kinase superfamily. Ser/Thr protein kinase family. In terms of assembly, monomer. Interacts with DRG1 (via its N-terminal); the interaction phosphorylates DRG1. In terms of processing, mainly autophosphorylated on serine/threonine residues. Also autophosphorylated on Tyr-198. As to expression, expressed in heart, liver, brain, spleen, lung, skeletal muscle, kidney and testis.

The protein localises to the cytoplasm. Its subcellular location is the perinuclear region. It localises to the membrane. It catalyses the reaction L-seryl-[protein] + ATP = O-phospho-L-seryl-[protein] + ADP + H(+). The enzyme catalyses L-threonyl-[protein] + ATP = O-phospho-L-threonyl-[protein] + ADP + H(+). It carries out the reaction L-tyrosyl-[protein] + ATP = O-phospho-L-tyrosyl-[protein] + ADP + H(+). In terms of biological role, membrane-associated protein kinase that phosphorylates on serine and threonine residues. In vitro substrates include DRG1, ENO1 and EIF4EBP1. Also autophosphorylates. May be involved in secretory vesicle trafficking or intracellular signaling. May have a role in regulating stromal-epithelial interactions that occur during ductal morphogenesis in the mammary gland. May be involved in TGF-beta signaling. Able to autophosphorylate on Tyr residue; it is however unclear whether it has tyrosine-protein kinase toward other proteins. This chain is Serine/threonine-protein kinase 16 (Stk16), found in Rattus norvegicus (Rat).